Here is a 137-residue protein sequence, read N- to C-terminus: Probable Hsp20 family chaperone (137 aa).

Residues 25–137 form the sHSP domain; it reads LTNNNNIMKT…PKEKHYIKLN (113 aa).

This sequence belongs to the small heat shock protein (HSP20) family.

Its function is as follows. Probable chaperone. This Onion yellows phytoplasma (strain OY-M) protein is Probable Hsp20 family chaperone.